A 124-amino-acid chain; its full sequence is Suppressor of RNA silencing (124 aa).

Positions 1–14 (MPKSEFFREERKRR) are basic motif (BM). The C-2 stretch occupies residues 30-68 (CGYSCGMPPAVEKVSVPADTEEDVYMLIFPYEQFCGEKH). A coiled-coil region spans residues 72 to 124 (YESLKDVSDDELKLRRLERQRETLLASFQQKLKRYDEKIALLSEKFKNLRSKL). A Phosphoserine modification is found at S79.

It belongs to the virgaviridae suppressor of RNA silencing family. As to quaternary structure, homooligomer. In terms of processing, phosphorylated at Ser-79 by a host PKA-like kinase; the phosphorylation at this site seems to suppress host cell death.

The protein resides in the host chloroplast envelope. Its subcellular location is the host endoplasmic reticulum. It is found in the host cell junction. The protein localises to the host plasmodesma. In terms of biological role, suppressor of RNA-mediated gene silencing, also known as post-transcriptional gene silencing (PTGS), a mechanism of plant viral defense that limits the accumulation of viral RNAs. Promotes viral cell-to-cell long distance movement. In Peanut clump virus (isolate 87/TGTA2) (PCV), this protein is Suppressor of RNA silencing.